The sequence spans 86 residues: Large ribosomal subunit protein uL10 (86 aa).

Belongs to the universal ribosomal protein uL10 family. Part of the ribosomal stalk of the 50S ribosomal subunit. The N-terminus interacts with L11 and the large rRNA to form the base of the stalk. The C-terminus forms an elongated spine to which L12 dimers bind in a sequential fashion forming a multimeric L10(L12)X complex.

In terms of biological role, forms part of the ribosomal stalk, playing a central role in the interaction of the ribosome with GTP-bound translation factors. The chain is Large ribosomal subunit protein uL10 (rplJ) from Serratia marcescens.